The sequence spans 379 residues: Succinyl-diaminopimelate desuccinylase (379 aa).

His-70 is a binding site for Zn(2+). Residue Asp-72 is part of the active site. Residue Asp-103 participates in Zn(2+) binding. Glu-137 functions as the Proton acceptor in the catalytic mechanism. Zn(2+) is bound by residues Glu-138, Glu-166, and His-352.

Belongs to the peptidase M20A family. DapE subfamily. As to quaternary structure, homodimer. Requires Zn(2+) as cofactor. It depends on Co(2+) as a cofactor.

The catalysed reaction is N-succinyl-(2S,6S)-2,6-diaminopimelate + H2O = (2S,6S)-2,6-diaminopimelate + succinate. It functions in the pathway amino-acid biosynthesis; L-lysine biosynthesis via DAP pathway; LL-2,6-diaminopimelate from (S)-tetrahydrodipicolinate (succinylase route): step 3/3. Its function is as follows. Catalyzes the hydrolysis of N-succinyl-L,L-diaminopimelic acid (SDAP), forming succinate and LL-2,6-diaminopimelate (DAP), an intermediate involved in the bacterial biosynthesis of lysine and meso-diaminopimelic acid, an essential component of bacterial cell walls. This chain is Succinyl-diaminopimelate desuccinylase, found in Burkholderia cenocepacia (strain HI2424).